The sequence spans 620 residues: Glutathione-regulated potassium-efflux system protein KefC (620 aa).

The next 12 membrane-spanning stretches (helical) occupy residues 4–24 (HTLI…PIAV), 26–46 (LGLG…PWGL), 54–74 (SILH…GLEL), 90–110 (GALQ…FLGL), 114–134 (VAEL…MQAM), 149–169 (FAVL…IPLL), 178–198 (MGAF…VVLL), 218–238 (VFSA…EEVG), 270–290 (GLLL…GTLL), 294–314 (LRIV…LWLI), 327–347 (WFAV…GAAQ), and 359–379 (SLTL…VILN). Residues 399–518 (QPRVIIAGFG…AGVEKPERET (120 aa)) enclose the RCK N-terminal domain. Residues 597-620 (GWQGTEEGKHTGNMADEPETKPSS) form a disordered region.

Belongs to the monovalent cation:proton antiporter 2 (CPA2) transporter (TC 2.A.37) family. KefC subfamily. In terms of assembly, homodimer. Interacts with the regulatory subunit KefF.

The protein resides in the cell inner membrane. Functionally, pore-forming subunit of a potassium efflux system that confers protection against electrophiles. Catalyzes K(+)/H(+) antiport. The chain is Glutathione-regulated potassium-efflux system protein KefC from Escherichia fergusonii (strain ATCC 35469 / DSM 13698 / CCUG 18766 / IAM 14443 / JCM 21226 / LMG 7866 / NBRC 102419 / NCTC 12128 / CDC 0568-73).